Here is a 101-residue protein sequence, read N- to C-terminus: Small ribosomal subunit protein uS14 (101 aa).

Belongs to the universal ribosomal protein uS14 family. Part of the 30S ribosomal subunit. Contacts proteins S3 and S10.

Its function is as follows. Binds 16S rRNA, required for the assembly of 30S particles and may also be responsible for determining the conformation of the 16S rRNA at the A site. In Methylorubrum populi (strain ATCC BAA-705 / NCIMB 13946 / BJ001) (Methylobacterium populi), this protein is Small ribosomal subunit protein uS14.